The primary structure comprises 669 residues: Probable pectinesterase/pectinesterase inhibitor 21 (669 aa).

A helical membrane pass occupies residues isoleucine 16–valine 36. Asparagine 52, asparagine 81, asparagine 94, asparagine 281, and asparagine 300 each carry an N-linked (GlcNAc...) asparagine glycan. The pectinesterase inhibitor 21 stretch occupies residues asparagine 52–isoleucine 205. Positions aspartate 255–aspartate 551 are pectinesterase 21. 2 residues coordinate substrate: threonine 330 and glutamine 360. Aspartate 383 serves as the catalytic Proton donor; for pectinesterase activity. A disulfide bridge connects residues cysteine 397 and cysteine 417. Aspartate 404 (nucleophile; for pectinesterase activity) is an active-site residue. Asparagine 416 carries N-linked (GlcNAc...) asparagine glycosylation. Positions 472 and 474 each coordinate substrate. The segment at alanine 615 to threonine 669 is disordered. Residues tyrosine 616–valine 628 show a composition bias toward polar residues. Over residues serine 629–serine 652 the composition is skewed to low complexity. The segment covering methionine 654 to threonine 669 has biased composition (polar residues).

The protein in the N-terminal section; belongs to the PMEI family. In the C-terminal section; belongs to the pectinesterase family. As to expression, expressed in flower buds.

The protein resides in the membrane. It catalyses the reaction [(1-&gt;4)-alpha-D-galacturonosyl methyl ester](n) + n H2O = [(1-&gt;4)-alpha-D-galacturonosyl](n) + n methanol + n H(+). The protein operates within glycan metabolism; pectin degradation; 2-dehydro-3-deoxy-D-gluconate from pectin: step 1/5. Acts in the modification of cell walls via demethylesterification of cell wall pectin. This is Probable pectinesterase/pectinesterase inhibitor 21 (PME21) from Arabidopsis thaliana (Mouse-ear cress).